Reading from the N-terminus, the 235-residue chain is Large ribosomal subunit protein uL1 (235 aa).

Belongs to the universal ribosomal protein uL1 family. As to quaternary structure, part of the 50S ribosomal subunit.

In terms of biological role, binds directly to 23S rRNA. The L1 stalk is quite mobile in the ribosome, and is involved in E site tRNA release. Functionally, protein L1 is also a translational repressor protein, it controls the translation of the L11 operon by binding to its mRNA. In Pseudarthrobacter chlorophenolicus (strain ATCC 700700 / DSM 12829 / CIP 107037 / JCM 12360 / KCTC 9906 / NCIMB 13794 / A6) (Arthrobacter chlorophenolicus), this protein is Large ribosomal subunit protein uL1.